Here is a 69-residue protein sequence, read N- to C-terminus: Conotoxin Cal12.1p5 (69 aa).

Residues 1 to 23 (DLITNSYTRGKPRHVTSWRNLKT) constitute a propeptide that is removed on maturation.

In terms of processing, contains 4 disulfide bonds. In terms of tissue distribution, expressed by the venom duct.

Its subcellular location is the secreted. This chain is Conotoxin Cal12.1p5, found in Californiconus californicus (California cone).